The sequence spans 951 residues: Protocadherin-20 (951 aa).

An N-terminal signal peptide occupies residues 1-60 (MRGRGNARSSQALGVSWCPATWHPRLDMGRLHRPRSSTSYRNLPHLFLFFLFVGPFSCLG). At 61–890 (SYSRATELLY…VESVSCMPTL (830 aa)) the chain is on the extracellular side. Cadherin domains follow at residues 64–209 (RATE…APQF), 210–320 (PVSQ…CPLF), 321–535 (TDSQ…APIF), 536–639 (LQPL…SPRF), 640–742 (INKD…PPLV), and 746–863 (QSNM…EPEI). Asn135 is a glycosylation site (N-linked (GlcNAc...) asparagine). Asn326 and Asn332 each carry an N-linked (GlcNAc...) asparagine glycan. N-linked (GlcNAc...) asparagine glycans are attached at residues Asn680, Asn748, Asn803, Asn844, and Asn849. Residues 891–911 (VALSVISLGSITLVTGMGIYI) traverse the membrane as a helical segment. At 912 to 951 (CLRKGEKHPREDENLEVQIPLKGKIDLHMRERKPMDISNI) the chain is on the cytoplasmic side.

It is found in the cell membrane. In terms of biological role, potential calcium-dependent cell-adhesion protein. The sequence is that of Protocadherin-20 (PCDH20) from Homo sapiens (Human).